Here is a 413-residue protein sequence, read N- to C-terminus: Elongation factor 1-alpha (413 aa).

The tr-type G domain occupies 5-211 (KTHMNLAFIG…DALDEPDKPV (207 aa)). The G1 stretch occupies residues 14–21 (GHVDHGKS). A GTP-binding site is contributed by 14-21 (GHVDHGKS). S21 lines the Mg(2+) pocket. The G2 stretch occupies residues 60-64 (GVTID). Residues 81 to 84 (DCPG) form a G3 region. GTP-binding positions include 81 to 85 (DCPGH) and 136 to 139 (NKMD). A G4 region spans residues 136-139 (NKMD). Positions 175 to 177 (SAF) are G5.

Belongs to the TRAFAC class translation factor GTPase superfamily. Classic translation factor GTPase family. EF-Tu/EF-1A subfamily.

The protein localises to the cytoplasm. It carries out the reaction GTP + H2O = GDP + phosphate + H(+). Its function is as follows. GTP hydrolase that promotes the GTP-dependent binding of aminoacyl-tRNA to the A-site of ribosomes during protein biosynthesis. In Methanosphaera stadtmanae (strain ATCC 43021 / DSM 3091 / JCM 11832 / MCB-3), this protein is Elongation factor 1-alpha.